A 741-amino-acid chain; its full sequence is Chromosome transmission fidelity protein 18 (741 aa).

Residue 183-190 (GPPGIGKT) coordinates ATP.

Belongs to the activator 1 small subunits family. CTF18 subfamily. In terms of assembly, component of the CTF18-RFC complex, which consists of CTF18, CTF8, DCC1, RFC2, RFC3, RFC4 and RFC5. CTF18 interacts with ECO1.

The protein resides in the nucleus. Functionally, essential for the fidelity of chromosome transmission. Required for the DNA replication block checkpoint. Component of the RFC-like complex CTF18-RFC which is required for efficient establishment of chromosome cohesion during S-phase and may load or unload POL30/PCNA. During a clamp loading circle, the RFC:clamp complex binds to DNA and the recognition of the double-stranded/single-stranded junction stimulates ATP hydrolysis by RFC. The complex presumably provides bipartite ATP sites in which one subunit supplies a catalytic site for hydrolysis of ATP bound to the neighboring subunit. Dissociation of RFC from the clamp leaves the clamp encircling DNA. The chain is Chromosome transmission fidelity protein 18 (CTF18) from Saccharomyces cerevisiae (strain ATCC 204508 / S288c) (Baker's yeast).